A 186-amino-acid chain; its full sequence is Ribosome-recycling factor (186 aa).

Belongs to the RRF family.

Its subcellular location is the cytoplasm. Functionally, responsible for the release of ribosomes from messenger RNA at the termination of protein biosynthesis. May increase the efficiency of translation by recycling ribosomes from one round of translation to another. The chain is Ribosome-recycling factor from Bartonella quintana (strain Toulouse) (Rochalimaea quintana).